Consider the following 256-residue polypeptide: UPF0280 protein MTH_727 (256 aa).

This sequence belongs to the UPF0280 family.

The protein is UPF0280 protein MTH_727 of Methanothermobacter thermautotrophicus (strain ATCC 29096 / DSM 1053 / JCM 10044 / NBRC 100330 / Delta H) (Methanobacterium thermoautotrophicum).